The chain runs to 141 residues: Protein stum homolog (141 aa).

A Phosphoserine modification is found at Ser-26. Transmembrane regions (helical) follow at residues 51 to 71 (FPVA…GTFV) and 87 to 107 (RHVC…ILTA).

The protein belongs to the SPEC3 family. Stum subfamily.

It localises to the membrane. In Homo sapiens (Human), this protein is Protein stum homolog.